A 237-amino-acid polypeptide reads, in one-letter code: Large ribosomal subunit protein uL1 (237 aa).

It belongs to the universal ribosomal protein uL1 family. Part of the 50S ribosomal subunit.

Binds directly to 23S rRNA. The L1 stalk is quite mobile in the ribosome, and is involved in E site tRNA release. Functionally, protein L1 is also a translational repressor protein, it controls the translation of the L11 operon by binding to its mRNA. The sequence is that of Large ribosomal subunit protein uL1 from Corynebacterium kroppenstedtii (strain DSM 44385 / JCM 11950 / CIP 105744 / CCUG 35717).